Consider the following 586-residue polypeptide: Septin-9 (586 aa).

Met1 carries the post-translational modification N-acetylmethionine. Residues 1 to 14 (MKKSYSGGTRTSSG) show a composition bias toward low complexity. Disordered regions lie at residues 1–49 (MKKS…RVQT), 62–108 (KFQD…SRRT), and 134–268 (RAEV…PASR). 2 positions are modified to phosphoserine: Ser22 and Ser30. Thr38, Thr42, and Thr49 each carry phosphothreonine. An N6-acetyllysine modification is found at Lys62. 4 positions are modified to phosphoserine: Ser82, Ser85, Ser89, and Ser96. Over residues 134–151 (RAEVLGHKTPEPAPRRTE) the composition is skewed to basic and acidic residues. Thr142 carries the phosphothreonine modification. Tyr278 is subject to Phosphotyrosine. The Septin-type G domain occupies 295 to 567 (QGFEFNIMVV…EAYRVKRLNE (273 aa)). Residues 305–312 (GQSGLGKS) form a G1 motif region. 305–312 (GQSGLGKS) is a binding site for GTP. Phosphoserine occurs at positions 327 and 332. Residues Thr339, Gly365, 445–453 (KADTLTLEE), Gly501, and Arg516 each bind GTP. The G3 motif stretch occupies residues 362-365 (DTPG). Residues 444-447 (AKAD) form a G4 motif region.

It belongs to the TRAFAC class TrmE-Era-EngA-EngB-Septin-like GTPase superfamily. Septin GTPase family. Septins polymerize into heterooligomeric protein complexes that form filaments, and associate with cellular membranes, actin filaments, and microtubules. GTPase activity is required for filament formation. Interacts with SEPTIN2, SEPTIN6, SEPTIN7, SEPTIN11 and SEPTIN14. Interacts with RTKN and ARHGEF18. In a mesenchymal cell line, Rho/RTKN signals cause disruption of wild-type septin filaments, but not of those containing isoform 2 variants HNA Trp-106 and Phe-111. In a mesenchymal cell line, isoform 2 variants HNA Trp-106 and Phe-111, but not wild type, form filaments with SEPTIN4. Widely expressed. Isoforms are differentially expressed in testes, kidney, liver heart, spleen, brain, peripheral blood leukocytes, skeletal muscle and kidney. Specific isoforms appear to demonstrate tissue specificity. Isoform 5 is the most highly expressed in fetal tissue. Isoform 1 is detected in all tissues except the brain and thymus, while isoform 2, isoform 3, and isoform 4 are detected at low levels in approximately half of the fetal tissues.

Its subcellular location is the cytoplasm. The protein resides in the cytoskeleton. In terms of biological role, filament-forming cytoskeletal GTPase. May play a role in cytokinesis (Potential). May play a role in the internalization of 2 intracellular microbial pathogens, Listeria monocytogenes and Shigella flexneri. This Homo sapiens (Human) protein is Septin-9.